The chain runs to 94 residues: Sucrose operon repressor (94 aa).

The HTH lacI-type domain maps to 1–56 (MASLHDVARLAGVSKSTVSRVINDEYGVKEATKQKVRQAVAECGYVPNQVAKDLKE). Residues 4-23 (LHDVARLAGVSKSTVSRVIN) constitute a DNA-binding region (H-T-H motif).

In terms of biological role, repressor for the scr operon. Binds D-fructose as an inducer. This Vibrio alginolyticus protein is Sucrose operon repressor (scrR).